Consider the following 207-residue polypeptide: Ribonuclease HII (207 aa).

The RNase H type-2 domain occupies 17-207 (RIVAGVDEVG…SFKPLAAFVD (191 aa)). A divalent metal cation is bound by residues Asp-23, Glu-24, and Asp-120.

The protein belongs to the RNase HII family. Mn(2+) serves as cofactor. Mg(2+) is required as a cofactor.

It is found in the cytoplasm. The catalysed reaction is Endonucleolytic cleavage to 5'-phosphomonoester.. Endonuclease that specifically degrades the RNA of RNA-DNA hybrids. The sequence is that of Ribonuclease HII from Herpetosiphon aurantiacus (strain ATCC 23779 / DSM 785 / 114-95).